We begin with the raw amino-acid sequence, 239 residues long: Probable transcriptional regulatory protein YeeI (239 aa).

Belongs to the TACO1 family. YeeN subfamily.

The protein resides in the cytoplasm. The sequence is that of Probable transcriptional regulatory protein YeeI (yeeI) from Bacillus subtilis (strain 168).